The sequence spans 803 residues: Integrin beta-1 (803 aa).

Residues 1–24 (MAETNLTLLTWAGILCCLIWSGSA) form the signal peptide. Gln25 bears the Blocked amino end (Gln) mark. Topologically, residues 25–733 (QQGGSDCIKA…ETPECPSGPD (709 aa)) are extracellular. The region spanning 30–80 (DCIKANAKSCGECIQAGPNCGWCKKTDFLQEGEPTSARCDDLAALKSKGCP) is the PSI domain. 22 disulfide bridges follow: Cys31–Cys49, Cys39–Cys469, Cys42–Cys68, Cys52–Cys79, Cys211–Cys217, Cys265–Cys305, Cys405–Cys419, Cys439–Cys467, Cys471–Cys491, Cys482–Cys494, Cys496–Cys505, Cys507–Cys538, Cys521–Cys536, Cys530–Cys541, Cys543–Cys558, Cys560–Cys581, Cys565–Cys579, Cys573–Cys584, Cys586–Cys595, Cys597–Cys620, Cys604–Cys618, and Cys612–Cys623. The region spanning 144–382 (DYPIDLYYLM…QLIIDAYNSL (239 aa)) is the VWFA domain. Mg(2+)-binding residues include Ser156 and Ser158. Ca(2+) is bound by residues Ser158, Asp161, Asp162, and Glu193. A CX3CL1-binding region spans residues 211-217 (CTGDQNC). The N-linked (GlcNAc...) asparagine glycan is linked to Asn216. Ca(2+) contacts are provided by Asn248, Asp250, Pro252, and Glu253. Glu253 is a binding site for Mg(2+). Asn273 carries an N-linked (GlcNAc...) asparagine glycan. The CX3CL1-binding stretch occupies residues 299–318 (LPNDGKCHLENNMYTMSHYY). Residues Asn367, Asn410, Asn421, Asn433, Asn445, and Asn486 are each glycosylated (N-linked (GlcNAc...) asparagine). Positions 387–470 (ILENSKLPKE…IHLQFICDCL (84 aa)) are interaction with TMEM182. 4 consecutive I-EGF domains span residues 471-506 (CQSEGEPNSPACHDGNGTFECGACRCNEGRIGRLCE), 507-559 (CSTD…KYCE), 560-596 (CDNFNCDRSNGLICGGNGICKCRVCECFPNFTGSACD), and 597-636 (CSLDTTPCMAGNGQICNGRGTCECGTCNCTDPKFQGPTCE). Asn525 carries N-linked (GlcNAc...) asparagine glycosylation. The N-linked (GlcNAc...) asparagine glycan is linked to Asn589. Asn624 is a glycosylation site (N-linked (GlcNAc...) asparagine). Disulfide bonds link Cys625/Cys635, Cys638/Cys641, Cys645/Cys696, Cys651/Cys670, Cys654/Cys666, and Cys704/Cys728. Asn674 is a glycosylation site (N-linked (GlcNAc...) asparagine). Residues 734-756 (IIPIVAGVVAGIVLIGLALLLIW) form a helical membrane-spanning segment. Residues 757–803 (KLLMIIHDRREFAKFEKEKMNAKWDTGENPIYKSAVTTVVNPKYEGK) lie on the Cytoplasmic side of the membrane. Tyr788 bears the Phosphotyrosine; by Tyr-kinases mark.

The protein belongs to the integrin beta chain family. Heterodimer of an alpha and a beta subunit. Beta-1 associates with either alpha-1, alpha-2, alpha-3, alpha-4, alpha-5, alpha-6, alpha-7, alpha-8, alpha-9, alpha-10, alpha-11 or alpha-V. Interacts with TMEM182 and LAMB1. Expressed on surface of embryonic fibroblasts (at protein level).

Its subcellular location is the cell membrane. It is found in the cell projection. It localises to the invadopodium membrane. The protein localises to the ruffle membrane. The protein resides in the melanosome. Its subcellular location is the lamellipodium. It is found in the ruffle. It localises to the cell junction. The protein localises to the focal adhesion. In terms of biological role, integrins alpha-1/beta-1, alpha-2/beta-1, alpha-10/beta-1 and alpha-11/beta-1 are receptors for collagen. Integrins alpha-1/beta-1 and alpha-2/beta-1 recognize the proline-hydroxylated sequence G-F-P-G-E-R in collagen. Integrins alpha-2/beta-1, alpha-3/beta-1, alpha-4/beta-1, alpha-5/beta-1, alpha-8/beta-1, alpha-10/beta-1, alpha-11/beta-1 and alpha-V/beta-1 are receptors for fibronectin. Alpha-4/beta-1 recognizes one or more domains within the alternatively spliced CS-1 and CS-5 regions of fibronectin. Integrin alpha-5/beta-1 is a receptor for fibrinogen. Integrin alpha-1/beta-1, alpha-2/beta-1, alpha-6/beta-1 and alpha-7/beta-1 are receptors for lamimin. Integrin alpha-6/beta-1 (ITGA6:ITGB1) is present in oocytes and is involved in sperm-egg fusion. Integrin alpha-4/beta-1 is a receptor for VCAM1 and recognizes the sequence Q-I-D-S in VCAM1. Integrin alpha-9/beta-1 is a receptor for VCAM1, cytotactin and osteopontin. It recognizes the sequence A-E-I-D-G-I-E-L in cytotactin. Integrin alpha-3/beta-1 is a receptor for epiligrin, thrombospondin and CSPG4. Integrin alpha-3/beta-1 provides a docking site for FAP (seprase) at invadopodia plasma membranes in a collagen-dependent manner and hence may participate in the adhesion, formation of invadopodia and matrix degradation processes, promoting cell invasion. Alpha-3/beta-1 may mediate with LGALS3 the stimulation by CSPG4 of endothelial cells migration. Integrin alpha-V/beta-1 is a receptor for vitronectin. Beta-1 integrins recognize the sequence R-G-D in a wide array of ligands. When associated with alpha-7/beta-1 integrin, regulates cell adhesion and laminin matrix deposition. Involved in promoting endothelial cell motility and angiogenesis. Involved in osteoblast compaction through the fibronectin fibrillogenesis cell-mediated matrix assembly process and the formation of mineralized bone nodules. May be involved in up-regulation of the activity of kinases such as PKC via binding to KRT1. Together with KRT1 and RACK1, serves as a platform for SRC activation or inactivation. ITGA4:ITGB1 binds to fractalkine (CX3CL1) and may act as its coreceptor in CX3CR1-dependent fractalkine signaling. ITGA4:ITGB1 and ITGA5:ITGB1 bind to PLA2G2A via a site (site 2) which is distinct from the classical ligand-binding site (site 1) and this induces integrin conformational changes and enhanced ligand binding to site 1. ITGA5:ITGB1 acts as a receptor for fibrillin-1 (FBN1) and mediates R-G-D-dependent cell adhesion to FBN1. ITGA5:ITGB1 acts as a receptor for fibronectin FN1 and mediates R-G-D-dependent cell adhesion to FN1. ITGA5:ITGB1 is a receptor for IL1B and binding is essential for IL1B signaling. ITGA5:ITGB3 is a receptor for soluble CD40LG and is required for CD40/CD40LG signaling. Plays an important role in myoblast differentiation and fusion during skeletal myogenesis. In Gallus gallus (Chicken), this protein is Integrin beta-1 (ITGB1).